Consider the following 340-residue polypeptide: Deubiquitinase SseL (340 aa).

H223 is a catalytic residue. The active-site Nucleophile is the C285.

Belongs to the peptidase C79 family.

It is found in the secreted. The protein resides in the host cytoplasm. In terms of biological role, effector proteins function to alter host cell physiology and promote bacterial survival in host tissues. This protease targets the host cell ubiquitin pathway by acting as a deubiquitinase in infected host cells. The protein is Deubiquitinase SseL (sseL) of Salmonella paratyphi B (strain ATCC BAA-1250 / SPB7).